We begin with the raw amino-acid sequence, 399 residues long: Dual-specificity RNA methyltransferase RlmN (399 aa).

Residue glutamate 122 is the Proton acceptor of the active site. In terms of domain architecture, Radical SAM core spans 128–371 (ETDRGTLCVS…VRTPRGRDIL (244 aa)). Cysteine 135 and cysteine 374 form a disulfide bridge. 3 residues coordinate [4Fe-4S] cluster: cysteine 142, cysteine 146, and cysteine 149. S-adenosyl-L-methionine-binding positions include 200 to 201 (GE), serine 232, 254 to 256 (SLH), and asparagine 331. The S-methylcysteine intermediate role is filled by cysteine 374.

Belongs to the radical SAM superfamily. RlmN family. [4Fe-4S] cluster is required as a cofactor.

It localises to the cytoplasm. It catalyses the reaction adenosine(2503) in 23S rRNA + 2 reduced [2Fe-2S]-[ferredoxin] + 2 S-adenosyl-L-methionine = 2-methyladenosine(2503) in 23S rRNA + 5'-deoxyadenosine + L-methionine + 2 oxidized [2Fe-2S]-[ferredoxin] + S-adenosyl-L-homocysteine. The catalysed reaction is adenosine(37) in tRNA + 2 reduced [2Fe-2S]-[ferredoxin] + 2 S-adenosyl-L-methionine = 2-methyladenosine(37) in tRNA + 5'-deoxyadenosine + L-methionine + 2 oxidized [2Fe-2S]-[ferredoxin] + S-adenosyl-L-homocysteine. In terms of biological role, specifically methylates position 2 of adenine 2503 in 23S rRNA and position 2 of adenine 37 in tRNAs. m2A2503 modification seems to play a crucial role in the proofreading step occurring at the peptidyl transferase center and thus would serve to optimize ribosomal fidelity. This is Dual-specificity RNA methyltransferase RlmN from Rhodopseudomonas palustris (strain ATCC BAA-98 / CGA009).